The sequence spans 434 residues: 3-phosphoshikimate 1-carboxyvinyltransferase (434 aa).

3-phosphoshikimate is bound by residues Lys22, Ser23, and Arg27. Lys22 is a binding site for phosphoenolpyruvate. The phosphoenolpyruvate site is built by Gly93 and Arg121. 3-phosphoshikimate contacts are provided by Ser168, Ser169, Gln170, Ser199, Asp320, and Lys347. Gln170 is a phosphoenolpyruvate binding site. Asp320 functions as the Proton acceptor in the catalytic mechanism. Phosphoenolpyruvate-binding residues include Arg351, Arg394, and Lys419.

The protein belongs to the EPSP synthase family. As to quaternary structure, monomer.

It localises to the cytoplasm. The catalysed reaction is 3-phosphoshikimate + phosphoenolpyruvate = 5-O-(1-carboxyvinyl)-3-phosphoshikimate + phosphate. Its pathway is metabolic intermediate biosynthesis; chorismate biosynthesis; chorismate from D-erythrose 4-phosphate and phosphoenolpyruvate: step 6/7. Catalyzes the transfer of the enolpyruvyl moiety of phosphoenolpyruvate (PEP) to the 5-hydroxyl of shikimate-3-phosphate (S3P) to produce enolpyruvyl shikimate-3-phosphate and inorganic phosphate. This chain is 3-phosphoshikimate 1-carboxyvinyltransferase, found in Burkholderia multivorans (strain ATCC 17616 / 249).